Reading from the N-terminus, the 143-residue chain is Cytochrome c-type biogenesis protein CcmE (143 aa).

The Cytoplasmic segment spans residues 1-8 (MNPVRRRK). The chain crosses the membrane as a helical; Signal-anchor for type II membrane protein span at residues 9–29 (LFILLFALTILSAAAALVLYA). The Periplasmic portion of the chain corresponds to 30–143 (LRQNISLFYT…KSALADKVKQ (114 aa)). Heme-binding residues include His124 and Tyr128.

This sequence belongs to the CcmE/CycJ family.

It is found in the cell inner membrane. Its function is as follows. Heme chaperone required for the biogenesis of c-type cytochromes. Transiently binds heme delivered by CcmC and transfers the heme to apo-cytochromes in a process facilitated by CcmF and CcmH. The sequence is that of Cytochrome c-type biogenesis protein CcmE from Legionella pneumophila (strain Corby).